A 252-amino-acid polypeptide reads, in one-letter code: MSLTGLPDIRKKIGQFHHLRIYKQILSFQGNFARLNYFLGDVFPANLRSASVSVFFEVRLGPRIPDCIVLLKSVDVKDEFAFHCYFFEFKTTLGKSTMQSVHHNCIHQAQYLQGLRQLQQSISFLDQYLIADEVSWNVVPVICFFRQWGLKLDFFKKFSGKTKRLSFSFIRDLFARSQDGAVQSLLSIPNYTNFRRACQKHTDLYRKRCRKAPKSVLTKTSGENRSRASRQVAKNAPKNRIRRTAKKDAKRQ.

The interval 215–252 is disordered; it reads SVLTKTSGENRSRASRQVAKNAPKNRIRRTAKKDAKRQ. Positions 237–252 are enriched in basic residues; that stretch reads PKNRIRRTAKKDAKRQ.

Belongs to the herpesviridae UL24 family.

Its subcellular location is the virion. The protein resides in the host cytoplasm. The protein localises to the host nucleus. It localises to the host nucleolus. It is found in the host Golgi apparatus. Functionally, may participate in nuclear egress of viral particles. Plays a role in the dispersal of several host nucleolar proteins including NCL/nucleolin and NPM1. Since deletion of host NCL/nucleolin negatively impact on nuclear egress, UL24 supposedly acts on this process through its effect on host nucleoli. The polypeptide is Protein UL24 homolog (U49) (Homo sapiens (Human)).